Reading from the N-terminus, the 279-residue chain is MPSLQKTKNRIALIDNIKKITKAMELVATSKMKKTQKHFLEVNEFSQSVLDIFSKIVSQIDPQIKLYPDGQKNSTLYIVISSDIGLAGSYNSNIFKILNSNIKNEDKLILIGQKAINFFSNRQDQIIETFKALPDYVTYKIAKLISDSALNSFLNKDVNQIKVVYTKFINLINQQEKISTILPIKKNPMKSEIKENAILEFEPDVESVFHKAIPLYLASIIFGFLTESKVSELAARRTAMESASKNAIDLIGNLKIEYNQTRQAKITQEISEIVAGSVE.

It belongs to the ATPase gamma chain family. As to quaternary structure, F-type ATPases have 2 components, CF(1) - the catalytic core - and CF(0) - the membrane proton channel. CF(1) has five subunits: alpha(3), beta(3), gamma(1), delta(1), epsilon(1). CF(0) has three main subunits: a, b and c.

It is found in the cell membrane. Its function is as follows. Produces ATP from ADP in the presence of a proton gradient across the membrane. The gamma chain is believed to be important in regulating ATPase activity and the flow of protons through the CF(0) complex. The protein is ATP synthase gamma chain of Mycoplasmopsis pulmonis (strain UAB CTIP) (Mycoplasma pulmonis).